Reading from the N-terminus, the 41-residue chain is Photosystem I reaction center subunit IX (41 aa).

The chain crosses the membrane as a helical span at residues Tyr7–Ile27.

This sequence belongs to the PsaJ family.

The protein resides in the plastid. Its subcellular location is the chloroplast thylakoid membrane. Its function is as follows. May help in the organization of the PsaE and PsaF subunits. The polypeptide is Photosystem I reaction center subunit IX (Pleurastrum terricola (Filamentous green alga)).